The following is a 520-amino-acid chain: Lysine--tRNA ligase (520 aa).

A disordered region spans residues 1-21 (MSDHLIPSIPTPAAAPAAAPA). Over residues 12 to 21 (PAAAPAAAPA) the composition is skewed to low complexity. Positions 430 and 437 each coordinate Mg(2+).

This sequence belongs to the class-II aminoacyl-tRNA synthetase family. In terms of assembly, homodimer. The cofactor is Mg(2+).

It localises to the cytoplasm. The enzyme catalyses tRNA(Lys) + L-lysine + ATP = L-lysyl-tRNA(Lys) + AMP + diphosphate. This is Lysine--tRNA ligase from Variovorax paradoxus (strain S110).